The primary structure comprises 356 residues: MSQDQDALTTEVLQRLRRKEGTWQDWGAGCRQLQKQGLSPQAIFEATGIEPIHQNQLITALQVSQSLGEAPESVRAYFQTRGSDLLYELRVLSAGDRLAAATLIVEKQLDVTAVHEVCRALKAVSYRKDNSEGFGESVGDRIGRYYWQLARQQRDLAQRSRLIAQGLRFVESASGRQALEKLLTDFTVVPAVNQPRLPLYRLDTAEEVPYLVPVAGTAPLTATVLQQVPRLSCTEVFRVVAVPQGMSLVALPAWQVLLNAVDPVAILWPAADLPAELPPSPEGLPIAQVLLVVDRGLAEWDRDRYLLIAPSPSEAVQLAWLPEPPTATVVGQLLLVLRPPQVLDESLNRELWFFEE.

Residues 7–185 (ALTTEVLQRL…RQALEKLLTD (179 aa)) are N-terminal alpha-helix. Residues 209-342 (PYLVPVAGTA…LLLVLRPPQV (134 aa)) are C-terminal beta-sheet.

The protein belongs to the RAF family. Homodimer. Forms an RbcL(8)-Raf1(8) complex. Forms complexes of many stoichiometries with RbcL with and without RbcS. RbcX and Raf1 can bind simultaneously to RbcL.

It is found in the cytoplasm. Its function is as follows. A major RuBisCO chaperone. Acts after GroEL-GroES chaperonin to fold and/or assemble the large subunit of RuBisCO (ccbL, rbcL). Cooperates with RbcX in RbcL folding, plays the major role in assembly of dimers into RbcL(8)-Raf1(8) intermediate complexes. RbcS replaces Raf1, leading to holoenzyme formation. Required for optimal reconstitution of RuBisCO upon expression of rbcL-rbcS subunits in E.coli. Only interacts with the large subunit (cbbL, rbcL). Probably acts in the final stages of RuBisCO assembly, possibly participating in the addition of the small subunit (ccbS, rbcS). The sequence is that of RuBisCO accumulation factor 1 from Thermosynechococcus vestitus (strain NIES-2133 / IAM M-273 / BP-1).